Reading from the N-terminus, the 353-residue chain is Deoxyhypusine synthase (353 aa).

Residues 90-94 (SNLIS), 116-118 (TAG), Glu-122, and Asp-228 each bind NAD(+). Residue 121-122 (EE) participates in spermidine binding. Asp-233 is a binding site for spermidine. Residue Gly-275 coordinates NAD(+). His-280 is a binding site for spermidine. 300 to 301 (TA) provides a ligand contact to NAD(+). Spermidine contacts are provided by residues 306-308 (GSD) and 315-321 (EAVSWGK). Lys-321 acts as the Nucleophile in catalysis. NAD(+) is bound at residue 334–335 (EA).

Belongs to the deoxyhypusine synthase family. As to quaternary structure, homotetramer. It depends on NAD(+) as a cofactor.

It carries out the reaction [eIF5A protein]-L-lysine + spermidine = [eIF5A protein]-deoxyhypusine + propane-1,3-diamine. It participates in protein modification; eIF5A hypusination. Functionally, catalyzes the NAD-dependent oxidative cleavage of spermidine and the subsequent transfer of the butylamine moiety of spermidine to the epsilon-amino group of a specific lysine residue of the eIF-5A precursor protein to form the intermediate deoxyhypusine residue. This is Deoxyhypusine synthase (dys-1) from Neurospora crassa (strain ATCC 24698 / 74-OR23-1A / CBS 708.71 / DSM 1257 / FGSC 987).